A 282-amino-acid chain; its full sequence is 4-diphosphocytidyl-2-C-methyl-D-erythritol kinase (282 aa).

Lys-9 is a catalytic residue. 98 to 108 (PMGGGLGGGSS) contacts ATP. Asp-140 is a catalytic residue.

Belongs to the GHMP kinase family. IspE subfamily. As to quaternary structure, homodimer.

It catalyses the reaction 4-CDP-2-C-methyl-D-erythritol + ATP = 4-CDP-2-C-methyl-D-erythritol 2-phosphate + ADP + H(+). Its pathway is isoprenoid biosynthesis; isopentenyl diphosphate biosynthesis via DXP pathway; isopentenyl diphosphate from 1-deoxy-D-xylulose 5-phosphate: step 3/6. Functionally, catalyzes the phosphorylation of the position 2 hydroxy group of 4-diphosphocytidyl-2C-methyl-D-erythritol. This is 4-diphosphocytidyl-2-C-methyl-D-erythritol kinase from Salmonella heidelberg (strain SL476).